A 197-amino-acid chain; its full sequence is Recombination protein RecR (197 aa).

Residues 55-70 (CVQCRDFTESEICTIC) form a C4-type zinc finger. Residues 78 to 173 (QQLCVVESPA…RPSRLAQGMP (96 aa)) enclose the Toprim domain.

The protein belongs to the RecR family.

Its function is as follows. May play a role in DNA repair. It seems to be involved in an RecBC-independent recombinational process of DNA repair. It may act with RecF and RecO. This chain is Recombination protein RecR, found in Xanthomonas axonopodis pv. citri (strain 306).